Reading from the N-terminus, the 354-residue chain is Vanillate O-demethylase oxygenase subunit (354 aa).

In terms of domain architecture, Rieske spans 7–107; sequence WYVACTPDEI…VEERYGFIWV (101 aa). Positions 47, 49, 66, and 69 each coordinate [2Fe-2S] cluster.

It belongs to the bacterial ring-hydroxylating dioxygenase alpha subunit family. This demethylase system consists of two proteins: an oxygenase and an oxygenase reductase. [2Fe-2S] cluster is required as a cofactor. Requires Fe cation as cofactor.

It carries out the reaction vanillate + NADH + O2 + H(+) = 3,4-dihydroxybenzoate + formaldehyde + NAD(+) + H2O. It functions in the pathway xenobiotic degradation; vanillyl-alcohol degradation. This chain is Vanillate O-demethylase oxygenase subunit (vanA), found in Pseudomonas sp. (strain HR199 / DSM 7063).